The primary structure comprises 554 residues: Alpha-taxilin (554 aa).

The segment at 1-66 (MKNQDKKNGP…ARAKAAQPGA (66 aa)) is disordered. Ser71 bears the Phosphoserine mark. Positions 85–166 (YCVDNNQGGP…RRPQEKKKAK (82 aa)) are disordered. The span at 91–103 (QGGPAEEGAQGEP) shows a compositional bias: low complexity. Residues 143–158 (EEIRASDEVGDRDHRR) are compositionally biased toward basic and acidic residues. Residues 186–491 (EEKLAALCKK…NKRVQDLTAG (306 aa)) adopt a coiled-coil conformation. The segment at 492 to 554 (GITDIGSERR…GPGEPTPATA (63 aa)) is disordered. A phosphoserine mark is found at Ser515 and Ser523.

It belongs to the taxilin family. Binds to the C-terminal coiled coil region of syntaxin family members STX1A, STX3A and STX4A, but not when these proteins are complexed with SNAP25, VAMP2 or STXBP1, suggesting that it interacts with syntaxins that do not form the SNARE complex.

Functionally, may be involved in intracellular vesicle traffic and potentially in calcium-dependent exocytosis in neuroendocrine cells. The chain is Alpha-taxilin (Txlna) from Mus musculus (Mouse).